A 121-amino-acid polypeptide reads, in one-letter code: uncharacterized protein (121 aa).

Residues 12-24 (EEGGASAAAPDAS) show a composition bias toward low complexity. 2 disordered regions span residues 12–63 (EEGG…RLEP) and 101–121 (KKLAQQPPRLEGSQKERSPVV). Residues 26 to 35 (KSKKGARPCF) show a composition bias toward basic residues. The span at 40-49 (QAGSCMTGRQ) shows a compositional bias: polar residues. The segment covering 112–121 (GSQKERSPVV) has biased composition (basic and acidic residues).

This is an uncharacterized protein from Homo sapiens (Human).